A 57-amino-acid polypeptide reads, in one-letter code: Large ribosomal subunit protein bL32 (57 aa).

Residues 1 to 22 are disordered; the sequence is MAVPKKKTSKSKRDKRRATWRH.

This sequence belongs to the bacterial ribosomal protein bL32 family.

The polypeptide is Large ribosomal subunit protein bL32 (Nostoc punctiforme (strain ATCC 29133 / PCC 73102)).